Reading from the N-terminus, the 193-residue chain is CRIB domain-containing protein RIC5 (193 aa).

One can recognise a CRIB domain in the interval 29 to 42 (IGIPTDVKHVAHIG). A disordered region spans residues 42–193 (GWEGPSATTP…CAGLGSSTGR (152 aa)). A compositionally biased stretch (basic and acidic residues) spans 55-67 (HDFKPTDQTKTET). A compositionally biased stretch (polar residues) spans 90-100 (STGNNSPTESP). Low complexity predominate over residues 123 to 134 (GSGSESGSGLEL).

As to quaternary structure, interacts with ARAC11/ROP1. In terms of tissue distribution, expressed in flowers and pollen.

It localises to the cell membrane. Functions as a downstream effector of Rho-related GTP binding proteins of the 'Rho of Plants' (ROPs) family. Participates in the propagation of ROP GTPase signals in specific cellular responses. Is involved in pollen tube growth regulation through its interaction with ARAC11/ROP1. The sequence is that of CRIB domain-containing protein RIC5 (RIC5) from Arabidopsis thaliana (Mouse-ear cress).